The chain runs to 106 residues: Urease subunit beta (106 aa).

It belongs to the urease beta subunit family. Heterotrimer of UreA (gamma), UreB (beta) and UreC (alpha) subunits. Three heterotrimers associate to form the active enzyme.

It is found in the cytoplasm. It carries out the reaction urea + 2 H2O + H(+) = hydrogencarbonate + 2 NH4(+). It functions in the pathway nitrogen metabolism; urea degradation; CO(2) and NH(3) from urea (urease route): step 1/1. This is Urease subunit beta from Escherichia coli O157:H7.